A 480-amino-acid chain; its full sequence is Glutamate--tRNA ligase (480 aa).

The 'HIGH' region motif lies at Pro21–Gly31. Zn(2+) is bound by residues Cys110, Cys112, Cys137, and His139. The 'KMSKS' region motif lies at Lys248 to Arg252. Position 251 (Lys251) interacts with ATP.

This sequence belongs to the class-I aminoacyl-tRNA synthetase family. Glutamate--tRNA ligase type 1 subfamily. Monomer. Zn(2+) is required as a cofactor.

It localises to the cytoplasm. It carries out the reaction tRNA(Glu) + L-glutamate + ATP = L-glutamyl-tRNA(Glu) + AMP + diphosphate. Functionally, catalyzes the attachment of glutamate to tRNA(Glu) in a two-step reaction: glutamate is first activated by ATP to form Glu-AMP and then transferred to the acceptor end of tRNA(Glu). This Histophilus somni (strain 129Pt) (Haemophilus somnus) protein is Glutamate--tRNA ligase.